The chain runs to 155 residues: Small ribosomal subunit protein uS7cz/uS7cy (155 aa).

It belongs to the universal ribosomal protein uS7 family. In terms of assembly, part of the 30S ribosomal subunit.

It localises to the plastid. The protein localises to the chloroplast. One of the primary rRNA binding proteins, it binds directly to 16S rRNA where it nucleates assembly of the head domain of the 30S subunit. The sequence is that of Small ribosomal subunit protein uS7cz/uS7cy (rps7-A) from Pelargonium hortorum (Common geranium).